A 159-amino-acid polypeptide reads, in one-letter code: Capsid protein (159 aa).

S2 bears the N-acetylserine; by host mark.

Belongs to the virgaviridae capsid protein family.

Its subcellular location is the virion. Its function is as follows. Capsid protein self-assembles to form rod-shaped virions about 18 nm in diameter with a central canal enclosing the viral genomic RNA. The polypeptide is Capsid protein (CP) (Nicotiana tabacum (Common tobacco)).